A 374-amino-acid polypeptide reads, in one-letter code: Carbamoyl phosphate synthase small chain (374 aa).

The tract at residues Met1–Gln183 is CPSase. 3 residues coordinate L-glutamine: Ser41, Gly235, and Gly237. The Glutamine amidotransferase type-1 domain occupies His187–Pro374. Cys264 (nucleophile) is an active-site residue. The L-glutamine site is built by Leu265, Gln268, Asn306, Gly308, and Phe309. Active-site residues include His348 and Glu350.

Belongs to the CarA family. As to quaternary structure, composed of two chains; the small (or glutamine) chain promotes the hydrolysis of glutamine to ammonia, which is used by the large (or ammonia) chain to synthesize carbamoyl phosphate. Tetramer of heterodimers (alpha,beta)4.

The enzyme catalyses hydrogencarbonate + L-glutamine + 2 ATP + H2O = carbamoyl phosphate + L-glutamate + 2 ADP + phosphate + 2 H(+). It catalyses the reaction L-glutamine + H2O = L-glutamate + NH4(+). It participates in amino-acid biosynthesis; L-arginine biosynthesis; carbamoyl phosphate from bicarbonate: step 1/1. The protein operates within pyrimidine metabolism; UMP biosynthesis via de novo pathway; (S)-dihydroorotate from bicarbonate: step 1/3. Small subunit of the glutamine-dependent carbamoyl phosphate synthetase (CPSase). CPSase catalyzes the formation of carbamoyl phosphate from the ammonia moiety of glutamine, carbonate, and phosphate donated by ATP, constituting the first step of 2 biosynthetic pathways, one leading to arginine and/or urea and the other to pyrimidine nucleotides. The small subunit (glutamine amidotransferase) binds and cleaves glutamine to supply the large subunit with the substrate ammonia. In Zymomonas mobilis subsp. mobilis (strain ATCC 31821 / ZM4 / CP4), this protein is Carbamoyl phosphate synthase small chain.